The following is a 361-amino-acid chain: Phenylalanine--tRNA ligase alpha subunit (361 aa).

E260 is a binding site for Mg(2+).

It belongs to the class-II aminoacyl-tRNA synthetase family. Phe-tRNA synthetase alpha subunit type 1 subfamily. As to quaternary structure, tetramer of two alpha and two beta subunits. It depends on Mg(2+) as a cofactor.

The protein resides in the cytoplasm. It carries out the reaction tRNA(Phe) + L-phenylalanine + ATP = L-phenylalanyl-tRNA(Phe) + AMP + diphosphate + H(+). The polypeptide is Phenylalanine--tRNA ligase alpha subunit (Allorhizobium ampelinum (strain ATCC BAA-846 / DSM 112012 / S4) (Agrobacterium vitis (strain S4))).